The primary structure comprises 87 residues: Co-chaperonin GroES (87 aa).

Belongs to the GroES chaperonin family. As to quaternary structure, heptamer of 7 subunits arranged in a ring. Interacts with the chaperonin GroEL.

The protein localises to the cytoplasm. Its function is as follows. Together with the chaperonin GroEL, plays an essential role in assisting protein folding. The GroEL-GroES system forms a nano-cage that allows encapsulation of the non-native substrate proteins and provides a physical environment optimized to promote and accelerate protein folding. GroES binds to the apical surface of the GroEL ring, thereby capping the opening of the GroEL channel. This chain is Co-chaperonin GroES, found in Campylobacter hominis (strain ATCC BAA-381 / DSM 21671 / CCUG 45161 / LMG 19568 / NCTC 13146 / CH001A).